A 400-amino-acid polypeptide reads, in one-letter code: CCA-adding enzyme (400 aa).

Residues G32 and R35 each coordinate ATP. Positions 32 and 35 each coordinate CTP. Mg(2+) is bound by residues D45 and D47. R116, D159, R162, R165, and R168 together coordinate ATP. R116, D159, R162, R165, and R168 together coordinate CTP.

The protein belongs to the tRNA nucleotidyltransferase/poly(A) polymerase family. Bacterial CCA-adding enzyme type 3 subfamily. As to quaternary structure, homodimer. The cofactor is Mg(2+).

The enzyme catalyses a tRNA precursor + 2 CTP + ATP = a tRNA with a 3' CCA end + 3 diphosphate. It catalyses the reaction a tRNA with a 3' CCA end + 2 CTP + ATP = a tRNA with a 3' CCACCA end + 3 diphosphate. Its function is as follows. Catalyzes the addition and repair of the essential 3'-terminal CCA sequence in tRNAs without using a nucleic acid template. Adds these three nucleotides in the order of C, C, and A to the tRNA nucleotide-73, using CTP and ATP as substrates and producing inorganic pyrophosphate. tRNA 3'-terminal CCA addition is required both for tRNA processing and repair. Also involved in tRNA surveillance by mediating tandem CCA addition to generate a CCACCA at the 3' terminus of unstable tRNAs. While stable tRNAs receive only 3'-terminal CCA, unstable tRNAs are marked with CCACCA and rapidly degraded. In Limosilactobacillus fermentum (strain NBRC 3956 / LMG 18251) (Lactobacillus fermentum), this protein is CCA-adding enzyme.